The following is a 514-amino-acid chain: GMP synthase [glutamine-hydrolyzing] (514 aa).

One can recognise a Glutamine amidotransferase type-1 domain in the interval 9–199 (MILVLDFGGQ…LFEVCQCTGD (191 aa)). Cys-86 (nucleophile) is an active-site residue. Residues His-173 and Glu-175 contribute to the active site. In terms of domain architecture, GMPS ATP-PPase spans 200-389 (WSMENFIEIE…LGLSDEIVWR (190 aa)). ATP is bound at residue 227 to 233 (SGGVDSS).

Homodimer.

It catalyses the reaction XMP + L-glutamine + ATP + H2O = GMP + L-glutamate + AMP + diphosphate + 2 H(+). Its pathway is purine metabolism; GMP biosynthesis; GMP from XMP (L-Gln route): step 1/1. Functionally, catalyzes the synthesis of GMP from XMP. The polypeptide is GMP synthase [glutamine-hydrolyzing] (Exiguobacterium sibiricum (strain DSM 17290 / CCUG 55495 / CIP 109462 / JCM 13490 / 255-15)).